Consider the following 63-residue polypeptide: uncharacterized protein (63 aa).

This is an uncharacterized protein from Haemophilus influenzae (strain ATCC 51907 / DSM 11121 / KW20 / Rd).